We begin with the raw amino-acid sequence, 207 residues long: Ribosomal RNA small subunit methyltransferase G (207 aa).

Residues Gly-73, Leu-78, 124–125 (VE), and Arg-139 contribute to the S-adenosyl-L-methionine site.

The protein belongs to the methyltransferase superfamily. RNA methyltransferase RsmG family.

The protein resides in the cytoplasm. It catalyses the reaction guanosine(527) in 16S rRNA + S-adenosyl-L-methionine = N(7)-methylguanosine(527) in 16S rRNA + S-adenosyl-L-homocysteine. Functionally, specifically methylates the N7 position of guanine in position 527 of 16S rRNA. The chain is Ribosomal RNA small subunit methyltransferase G from Salmonella arizonae (strain ATCC BAA-731 / CDC346-86 / RSK2980).